A 320-amino-acid chain; its full sequence is Tetraspanin-32 (320 aa).

The next 4 membrane-spanning stretches (helical) occupy residues 14 to 34, 60 to 80, 90 to 110, and 203 to 223; these read MLVTCFFILLLGLSVATMVTL, WAFSAGLSLVGLLTLGAVLSA, LMAGGFLCFSLAFCAQVQVVF, and SIGLALTVSALLFSSFLWFAI.

Belongs to the tetraspanin (TM4SF) family. As to expression, expressed ubiquitously at low levels. High levels of expression are confined to hematopoietic tissues including peripheral blood leukocytes, thymus and spleen.

It localises to the membrane. This is Tetraspanin-32 (TSPAN32) from Homo sapiens (Human).